Here is a 197-residue protein sequence, read N- to C-terminus: UPF0056 inner membrane protein YhgN (197 aa).

Topologically, residues 1 to 3 (MNE) are periplasmic. Residues 4-24 (IISAAVLLILIMDPLGNLPIF) form a helical membrane-spanning segment. The Cytoplasmic segment spans residues 25–44 (MSVLKHTEPKRRRAIMVREL). The helical transmembrane segment at 45-65 (LIALLVMLVFLFAGEKILAFL) threads the bilayer. Residues 66–71 (SLRAET) lie on the Periplasmic side of the membrane. Residues 72–92 (VSISGGIILFLIAIKMIFPSA) form a helical membrane-spanning segment. The Cytoplasmic portion of the chain corresponds to 93–105 (SGNSSGLPAGEEP). A helical transmembrane segment spans residues 106-126 (FIVPLAIPLVAGPTILATLML). The Periplasmic segment spans residues 127–138 (LSHQYPNQMGHL). A helical membrane pass occupies residues 139 to 159 (VIALLLAWGGTFVILLQSSLF). Residues 160-173 (LRLLGEKGVNALER) are Cytoplasmic-facing. Residues 174 to 194 (LMGLILVMMATQMFLDGIRMW) traverse the membrane as a helical segment. Residues 195-197 (MKG) lie on the Periplasmic side of the membrane.

The protein belongs to the UPF0056 (MarC) family.

It is found in the cell inner membrane. This chain is UPF0056 inner membrane protein YhgN (yhgN), found in Escherichia coli O157:H7.